Here is a 150-residue protein sequence, read N- to C-terminus: uncharacterized protein (150 aa).

This is an uncharacterized protein from Escherichia coli O157:H7.